Here is a 241-residue protein sequence, read N- to C-terminus: 1-(5-phosphoribosyl)-5-[(5-phosphoribosylamino)methylideneamino] imidazole-4-carboxamide isomerase (241 aa).

The Proton acceptor role is filled by Asp-8. The active-site Proton donor is the Asp-127.

Belongs to the HisA/HisF family.

The protein resides in the cytoplasm. The enzyme catalyses 1-(5-phospho-beta-D-ribosyl)-5-[(5-phospho-beta-D-ribosylamino)methylideneamino]imidazole-4-carboxamide = 5-[(5-phospho-1-deoxy-D-ribulos-1-ylimino)methylamino]-1-(5-phospho-beta-D-ribosyl)imidazole-4-carboxamide. It functions in the pathway amino-acid biosynthesis; L-histidine biosynthesis; L-histidine from 5-phospho-alpha-D-ribose 1-diphosphate: step 4/9. This chain is 1-(5-phosphoribosyl)-5-[(5-phosphoribosylamino)methylideneamino] imidazole-4-carboxamide isomerase, found in Thermotoga petrophila (strain ATCC BAA-488 / DSM 13995 / JCM 10881 / RKU-1).